The sequence spans 156 residues: Small ribosomal subunit protein uS7 (156 aa).

The protein belongs to the universal ribosomal protein uS7 family. As to quaternary structure, part of the 30S ribosomal subunit. Contacts proteins S9 and S11.

In terms of biological role, one of the primary rRNA binding proteins, it binds directly to 16S rRNA where it nucleates assembly of the head domain of the 30S subunit. Is located at the subunit interface close to the decoding center, probably blocks exit of the E-site tRNA. In Treponema denticola (strain ATCC 35405 / DSM 14222 / CIP 103919 / JCM 8153 / KCTC 15104), this protein is Small ribosomal subunit protein uS7.